We begin with the raw amino-acid sequence, 186 residues long: Nascent polypeptide-associated complex subunit beta (186 aa).

The NAC-A/B domain maps to 65 to 130 (GADDKKLQTT…GEEKELTELV (66 aa)). The disordered stretch occupies residues 153 to 186 (QNMQKQAGAEGKKDEDEDDIPDLVEGENFESNVE). The segment covering 167 to 186 (EDEDDIPDLVEGENFESNVE) has biased composition (acidic residues).

It belongs to the NAC-beta family. Part of the nascent polypeptide-associated complex (NAC), consisting of egd2 and egd1. NAC associates with ribosomes via egd1.

The protein resides in the cytoplasm. It is found in the nucleus. Functionally, component of the nascent polypeptide-associated complex (NAC), a dynamic component of the ribosomal exit tunnel, protecting the emerging polypeptides from interaction with other cytoplasmic proteins to ensure appropriate nascent protein targeting. The NAC complex also promotes mitochondrial protein import by enhancing productive ribosome interactions with the outer mitochondrial membrane and blocks the inappropriate interaction of ribosomes translating non-secretory nascent polypeptides with translocation sites in the membrane of the endoplasmic reticulum. EGD1 may act as a transcription factor that exert a negative effect on the expression of several genes that are transcribed by RNA polymerase II. The polypeptide is Nascent polypeptide-associated complex subunit beta (egd1) (Aspergillus fumigatus (strain ATCC MYA-4609 / CBS 101355 / FGSC A1100 / Af293) (Neosartorya fumigata)).